Reading from the N-terminus, the 531-residue chain is Developmental and secondary metabolism regulator VE1 (531 aa).

Residues 26-220 (NRSLWYQMTV…ADQGCPVRIR (195 aa)) form the Velvet domain. The Nuclear localization signal signature appears at 40 to 45 (ERARAC). Disordered stretches follow at residues 206–435 (LSKT…SQTS) and 447–517 (PVSP…SRAD). Over residues 244–253 (FERREEDFGR) the composition is skewed to basic and acidic residues. A compositionally biased stretch (pro residues) spans 295-306 (YPPPPPPPPSYE). The segment covering 348–357 (YAPTSQSPYS) has biased composition (polar residues). Residues 381-390 (LKHELYDRRQ) are compositionally biased toward basic and acidic residues. Residues 391-405 (STSTYVPPSPSVYST) show a composition bias toward low complexity. Over residues 416–427 (SYPPTPVAAPRP) the composition is skewed to pro residues. A PEST region spans residues 430 to 461 (MHSQTSLPALKIDQLVSPVSPLPPIEPQTGPA). Polar residues predominate over residues 479-491 (FAQSTRPLHNGQR).

It belongs to the velvet family. VeA subfamily. Component of the heterotrimeric velvet complex composed of LAE1, VE1 and VELB; VE1 acting as a bridging protein between LAE1 and VELB. Interacts with VELB and VELC.

The protein localises to the nucleus. It is found in the cytoplasm. Functionally, component of the velvet transcription factor complex that controls sexual/asexual developmental ratio in response to light, promoting sexual development in the darkness while stimulating asexual sporulation under illumination. The velvet complex hat acts as a global regulator for secondary metabolite gene expression. Controls the expression of the cycotoxins fumonisins and fusarins gene cluster. Involved in cell wall integrity, cell surface hydrophobicity, hyphal polarity and conidiation pattern. Required for pathogenicity against maize seedlings. Involved in oxidative stress resistance by positively regulating the transcription of the catalase-encoding gene CAT2. In Gibberella moniliformis (strain M3125 / FGSC 7600) (Maize ear and stalk rot fungus), this protein is Developmental and secondary metabolism regulator VE1.